Consider the following 389-residue polypeptide: Diaminopimelate decarboxylase (389 aa).

An N6-(pyridoxal phosphate)lysine modification is found at Lys58. Pyridoxal 5'-phosphate contacts are provided by residues Gly233 and 271-274 (ELGR). The substrate site is built by Arg274, Arg310, Tyr314, Glu342, and Tyr370. A pyridoxal 5'-phosphate-binding site is contributed by Tyr370.

The protein belongs to the Orn/Lys/Arg decarboxylase class-II family. LysA subfamily. As to quaternary structure, homodimer. The cofactor is pyridoxal 5'-phosphate.

The catalysed reaction is meso-2,6-diaminopimelate + H(+) = L-lysine + CO2. It participates in amino-acid biosynthesis; L-lysine biosynthesis via DAP pathway; L-lysine from DL-2,6-diaminopimelate: step 1/1. In terms of biological role, specifically catalyzes the decarboxylation of meso-diaminopimelate (meso-DAP) to L-lysine. The chain is Diaminopimelate decarboxylase from Francisella tularensis subsp. holarctica (strain LVS).